Reading from the N-terminus, the 422-residue chain is Gamma-glutamyl phosphate reductase (422 aa).

Belongs to the gamma-glutamyl phosphate reductase family.

The protein resides in the cytoplasm. It carries out the reaction L-glutamate 5-semialdehyde + phosphate + NADP(+) = L-glutamyl 5-phosphate + NADPH + H(+). It participates in amino-acid biosynthesis; L-proline biosynthesis; L-glutamate 5-semialdehyde from L-glutamate: step 2/2. Its function is as follows. Catalyzes the NADPH-dependent reduction of L-glutamate 5-phosphate into L-glutamate 5-semialdehyde and phosphate. The product spontaneously undergoes cyclization to form 1-pyrroline-5-carboxylate. The protein is Gamma-glutamyl phosphate reductase of Nitrosomonas europaea (strain ATCC 19718 / CIP 103999 / KCTC 2705 / NBRC 14298).